The chain runs to 99 residues: Large ribosomal subunit protein uL23 (99 aa).

The protein belongs to the universal ribosomal protein uL23 family. Part of the 50S ribosomal subunit. Contacts protein L29, and trigger factor when it is bound to the ribosome.

Its function is as follows. One of the early assembly proteins it binds 23S rRNA. One of the proteins that surrounds the polypeptide exit tunnel on the outside of the ribosome. Forms the main docking site for trigger factor binding to the ribosome. The chain is Large ribosomal subunit protein uL23 from Leifsonia xyli subsp. xyli (strain CTCB07).